A 471-amino-acid polypeptide reads, in one-letter code: Light-independent protochlorophyllide reductase subunit N (471 aa).

Positions 22, 47, and 107 each coordinate [4Fe-4S] cluster.

Belongs to the BchN/ChlN family. Protochlorophyllide reductase is composed of three subunits; ChlL, ChlN and ChlB. Forms a heterotetramer of two ChlB and two ChlN subunits. [4Fe-4S] cluster is required as a cofactor.

It localises to the plastid. Its subcellular location is the chloroplast. It catalyses the reaction chlorophyllide a + oxidized 2[4Fe-4S]-[ferredoxin] + 2 ADP + 2 phosphate = protochlorophyllide a + reduced 2[4Fe-4S]-[ferredoxin] + 2 ATP + 2 H2O. The protein operates within porphyrin-containing compound metabolism; chlorophyll biosynthesis (light-independent). Its function is as follows. Component of the dark-operative protochlorophyllide reductase (DPOR) that uses Mg-ATP and reduced ferredoxin to reduce ring D of protochlorophyllide (Pchlide) to form chlorophyllide a (Chlide). This reaction is light-independent. The NB-protein (ChlN-ChlB) is the catalytic component of the complex. The polypeptide is Light-independent protochlorophyllide reductase subunit N (Anthoceros angustus (Hornwort)).